The primary structure comprises 184 residues: Effector CFEM1 (184 aa).

Residues 1–17 (MKYSVAFVALAAVAAQA) form the signal peptide. The CFEM domain maps to 18-112 (QSLADVPKCA…PTTTAAATST (95 aa)). Intrachain disulfides connect Cys-26–Cys-68, Cys-30–Cys-63, Cys-41–Cys-48, and Cys-50–Cys-85. A heme-binding site is contributed by Asp-45. Disordered stretches follow at residues 83–106 (NLCK…PTTT) and 136–163 (IIPT…EQAN). The segment covering 88–103 (PPKESEAKSTAEEEKP) has biased composition (basic and acidic residues). The GPI-anchor amidated asparagine moiety is linked to residue Asn-163. Residues 164–184 (GAAGLKGLGALAMAAFAALAL) constitute a propeptide, removed in mature form.

It belongs to the RBT5 family. As to quaternary structure, interacts with Z.mays LRR5; the interaction is direct. Interacts (via CFEM domain) with Z.mays WAK17 isoform 2; the interaction is direct.

It is found in the secreted. The protein localises to the cell wall. Its subcellular location is the cell membrane. The protein resides in the cell septum. It localises to the cytoplasm. Suppresses host programmed cell death during infection by binding to Z.mays WAK17 isoform 2 and Z.mays LRR5, to prevent activation of Z.mays WAK17 isoform 1 and the downstream hypersensitive response. This is Effector CFEM1 from Gibberella zeae (strain ATCC MYA-4620 / CBS 123657 / FGSC 9075 / NRRL 31084 / PH-1) (Wheat head blight fungus).